The chain runs to 777 residues: Zinc finger protein 786 (777 aa).

The region spanning 9–80 (LTFEDVAIYF…WGEKKKPDKE (72 aa)) is the KRAB domain. The segment at 194–216 (NSCPVCRENSWEKNHLVKQQKGH) adopts a C2H2-type 1; degenerate zinc-finger fold. A C2H2-type 2 zinc finger spans residues 240 to 262 (ISCLGCGKSFRLKQYLVRHLDIH). A C2H2-type 3; degenerate zinc finger spans residues 268 to 291 (PQCPKCKMCFHHERTLFSHHLKNS). A C2H2-type 4; degenerate zinc finger spans residues 420 to 442 (VFCRKCGQGFTKHCGLTEHTRIL). 11 consecutive C2H2-type zinc fingers follow at residues 448 to 470 (FWCAQCGRNFSQKGQLLRHQRLH), 476 to 498 (FQCTMCELRFHLKSRLRAHQLQH), 504 to 526 (FSCSECGRAFTHQCKLREHLRVH), 532 to 554 (FQCPECHKSFRLKGVLKAHQRIH), 560 to 582 (FSCGECGKGFIRQSKLTEHFRVH), 588 to 610 (FQCPECDRRFRLKGQLLSHQRLH), 616 to 638 (FQCPECGKSYRVKADMKAHQLLH), 644 to 665 (FSCQCGKGFAKQSKLVEHMRTH), 671 to 693 (FQCPKCDKSFRLKAQLLSHQGLH), 699 to 721 (FHCPECDKNFREKGHMLRHQRIH), and 727 to 749 (FACGDCGKGFIYKSKLAEHIRVH).

The protein belongs to the krueppel C2H2-type zinc-finger protein family.

The protein localises to the nucleus. Functionally, may be involved in transcriptional regulation. This Mus musculus (Mouse) protein is Zinc finger protein 786 (Znf786).